Here is a 274-residue protein sequence, read N- to C-terminus: Energy-coupling factor transporter ATP-binding protein EcfA1 (274 aa).

Positions 10-241 (ASFQGVYFSY…AAELQKIRLD (232 aa)) constitute an ABC transporter domain. Residue 42–49 (GHNGSGKS) participates in ATP binding.

It belongs to the ABC transporter superfamily. Energy-coupling factor EcfA family. In terms of assembly, forms a stable energy-coupling factor (ECF) transporter complex composed of 2 membrane-embedded substrate-binding proteins (S component), 2 ATP-binding proteins (A component) and 2 transmembrane proteins (T component).

Its subcellular location is the cell membrane. In terms of biological role, ATP-binding (A) component of a common energy-coupling factor (ECF) ABC-transporter complex. Unlike classic ABC transporters this ECF transporter provides the energy necessary to transport a number of different substrates. The chain is Energy-coupling factor transporter ATP-binding protein EcfA1 from Mycoplasma pneumoniae (strain ATCC 29342 / M129 / Subtype 1) (Mycoplasmoides pneumoniae).